The chain runs to 229 residues: Probable transmembrane reductase CYB561D1 (229 aa).

Over 1 to 24 (MQPLEVGLVPAPAGEPRLTRWLRR) the chain is Cytoplasmic. The Cytochrome b561 domain occupies 22–224 (LRRGSGILAH…HQISRSYLPR (203 aa)). A helical membrane pass occupies residues 25 to 45 (GSGILAHLVALGFTIFLTALS). At 46-53 (RPGTSLFS) the chain is on the lumenal side. The helical transmembrane segment at 54–74 (WHPVFMALAFCLCMAEAILLF) threads the bilayer. A heme b-binding site is contributed by His-55. Residues 75–91 (SPEHSLFFFCSRKARIR) are Cytoplasmic-facing. A helical membrane pass occupies residues 92 to 112 (LHWAGQTLAILCAALGLGFII). 2 residues coordinate heme b: His-93 and His-127. Residues 113–128 (SSRTRSELPHLVSWHS) are Lumenal-facing. The chain crosses the membrane as a helical span at residues 129-149 (WVGALTLLATAVQALCGLCLL). Residues 150-169 (CPRAARVSRVARLKLYHLTC) lie on the Cytoplasmic side of the membrane. His-166 serves as a coordination point for heme b. A helical membrane pass occupies residues 170-190 (GLVVYLMATVTVLLGMYSVWF). At 191–193 (QAQ) the chain is on the lumenal side. The helical transmembrane segment at 194–214 (IKGAAWYLCLALPVYPALVIM) threads the bilayer. The Cytoplasmic portion of the chain corresponds to 215–229 (HQISRSYLPRKKMEM).

It depends on heme b as a cofactor.

The protein resides in the membrane. The enzyme catalyses monodehydro-L-ascorbate radical(out) + L-ascorbate(in) = monodehydro-L-ascorbate radical(in) + L-ascorbate(out). It catalyses the reaction Fe(3+)(out) + L-ascorbate(in) = monodehydro-L-ascorbate radical(in) + Fe(2+)(out) + H(+). Its function is as follows. Probable transmembrane reductase that may use ascorbate as an electron donor and transfer electrons across membranes to reduce monodehydro-L-ascorbate radical and iron cations Fe(3+) in another cellular compartment. This is Probable transmembrane reductase CYB561D1 from Homo sapiens (Human).